Reading from the N-terminus, the 500-residue chain is Ribose import ATP-binding protein RbsA (500 aa).

ABC transporter domains are found at residues 6–242 (LALS…VGRK) and 252–495 (AQQG…VGRN). 38–45 (GENGAGKS) contributes to the ATP binding site.

Belongs to the ABC transporter superfamily. Ribose importer (TC 3.A.1.2.1) family. In terms of assembly, the complex is composed of an ATP-binding protein (RbsA), two transmembrane proteins (RbsC) and a solute-binding protein (RbsB).

It is found in the cell inner membrane. It carries out the reaction D-ribose(out) + ATP + H2O = D-ribose(in) + ADP + phosphate + H(+). Functionally, part of the ABC transporter complex RbsABC involved in ribose import. Responsible for energy coupling to the transport system. The sequence is that of Ribose import ATP-binding protein RbsA from Vibrio cholerae serotype O1 (strain ATCC 39315 / El Tor Inaba N16961).